The following is a 398-amino-acid chain: MSHRKFEAPRHGNLGFRPRKRAARHQGKVKSFPKDDRTQKVHLTAFMGYKAGMTHVVRDLEKPGSKMHKKEIVEAVTIIECPPMYIVGLVGYVETAQGLKTYKTVWAQHLSDNFRRRLYKNWYKSKSKKAFTKYVKQYETEEGKKSIEASLQAIKKRCSVVRVIAHTQVHKLKLTQKKAHVLEIQVNGGSIVEKVNFAVANFEKTVNVTGVFAENELIDVIGVTKGKGFNGVIKRWGVRKLPRKTHKGLRKVACIGAWHPSRVSTTVPRAGQLGYHHRVERNKKIYRIGQAQPEDGKQISTGKTEFDLTEKTINPMGGFAHYGMVKHEFLMLKGCVAGPRKRALTLRKSITTQTGRAALEKITLKFIDTSSKFGHGLHQTAEDKTKYFGVKKSRSTKA.

Residues 1–10 are compositionally biased toward basic and acidic residues; that stretch reads MSHRKFEAPR. The segment at 1 to 34 is disordered; that stretch reads MSHRKFEAPRHGNLGFRPRKRAARHQGKVKSFPK. Basic residues predominate over residues 17 to 28; sequence RPRKRAARHQGK.

This sequence belongs to the universal ribosomal protein uL3 family.

The protein localises to the cytoplasm. The L3 protein is a component of the large subunit of cytoplasmic ribosomes. This is Large ribosomal subunit protein uL3 (rpl3) from Dictyostelium discoideum (Social amoeba).